The sequence spans 452 residues: GTPase Der (452 aa).

2 consecutive EngA-type G domains span residues 4–169 (PIVA…PAPQ) and 177–352 (IKVA…QEHR). GTP-binding positions include 10-17 (GRPNVGKS), 57-61 (DTGGL), 120-123 (NKCE), 183-190 (GRPNVGKS), 230-234 (DTAGI), and 295-298 (NKWD). The 87-residue stretch at 353-439 (RRVTTAVINE…IRLFWRGKKV (87 aa)) folds into the KH-like domain.

It belongs to the TRAFAC class TrmE-Era-EngA-EngB-Septin-like GTPase superfamily. EngA (Der) GTPase family. As to quaternary structure, associates with the 50S ribosomal subunit.

Its function is as follows. GTPase that plays an essential role in the late steps of ribosome biogenesis. This is GTPase Der from Synechocystis sp. (strain ATCC 27184 / PCC 6803 / Kazusa).